The chain runs to 606 residues: Methionine--tRNA ligase (606 aa).

Positions 14–24 match the 'HIGH' region motif; it reads PYANGPRHIGH. Zn(2+) contacts are provided by Cys146, Cys149, Cys159, and Cys162. Residues 351-355 carry the 'KMSKS' region motif; that stretch reads KFSSS. Ser354 is a binding site for ATP.

Belongs to the class-I aminoacyl-tRNA synthetase family. MetG type 1 subfamily. In terms of assembly, monomer. Requires Zn(2+) as cofactor.

It localises to the cytoplasm. It carries out the reaction tRNA(Met) + L-methionine + ATP = L-methionyl-tRNA(Met) + AMP + diphosphate. Its function is as follows. Is required not only for elongation of protein synthesis but also for the initiation of all mRNA translation through initiator tRNA(fMet) aminoacylation. The chain is Methionine--tRNA ligase from Thermobifida fusca (strain YX).